A 347-amino-acid chain; its full sequence is Membrane progestin receptor gamma-B (347 aa).

Residues 1-52 (MLSLIKLQRVFNVHQVPKAFHEDGIISGYRHPRSSATECVWSLFQLTNETLN) lie on the Cytoplasmic side of the membrane. Residues 53-73 (VWTHFLPTWYFLWKLMTVLLM) form a helical membrane-spanning segment. Residues 74-81 (EDVWNEAY) lie on the Extracellular side of the membrane. The helical transmembrane segment at 82–102 (TWPLLVFLFSCCVYPLASSCA) threads the bilayer. Topologically, residues 103 to 114 (HTFSSMSTRARH) are cytoplasmic. The chain crosses the membrane as a helical span at residues 115–135 (ICYFFDYGALSFYSLGSAISY). At 136 to 138 (SAY) the chain is on the extracellular side. Residues 139–159 (VFPDAWLSSSFHAYYISVAVF) form a helical membrane-spanning segment. Residues 160–201 (NTVLSTSLACYSRLGLPLLHYSHDIVERFSERQCPRMSKVLR) lie on the Cytoplasmic side of the membrane. A helical membrane pass occupies residues 202 to 222 (ILAFAYPYLFDNIPLFYRLFV). At 223 to 235 (CVGEGCTDNEANS) the chain is on the extracellular side. The helical transmembrane segment at 236-256 (VHVQHTLLAFLTSFLFATHLP) threads the bilayer. Over 257–314 (ERLAPGRFDYIGHSHQLFHVCAIIGTHFQMKAIEMDMGLRRSQLLASAPAISFNNTIG) the chain is Cytoplasmic. Residues 315–335 (AALLCVSVSLGIICVYSLPLL) traverse the membrane as a helical segment. Over 336–347 (YSSNPKNTANKE) the chain is Extracellular.

Belongs to the ADIPOR family.

It is found in the membrane. Its function is as follows. Steroid membrane receptor. Binds progesterone. May be involved in oocyte maturation. In Danio rerio (Zebrafish), this protein is Membrane progestin receptor gamma-B.